We begin with the raw amino-acid sequence, 586 residues long: Ezrin (586 aa).

Residues 2-295 form the FERM domain; the sequence is PKPINVRVTT…GNHELYMRRR (294 aa). The residue at position 60 (lysine 60) is an N6-acetyllysine. The [IL]-x-C-x-x-[DE] motif signature appears at 115 to 120; sequence IYCPPE. Phosphotyrosine; by PDGFR is present on tyrosine 146. Positions 244 to 586 are interaction with SCYL3; that stretch reads EIRNISFNDK…KQRIDEFEAM (343 aa). A coiled-coil region spans residues 302–462; that stretch reads VQQMKAQARE…QDDLVKTKEE (161 aa). A disordered region spans residues 306–338; the sequence is KAQAREEKHQKQLERQQLETEKKRRETVEREKE. The segment covering 308 to 338 has biased composition (basic and acidic residues); that stretch reads QAREEKHQKQLERQQLETEKKRRETVEREKE. Position 366 is a phosphoserine (serine 366). The residue at position 478 (tyrosine 478) is a Phosphotyrosine. The residue at position 535 (serine 535) is a Phosphoserine. Threonine 567 carries the phosphothreonine; by ROCK2 and PKC/PRKCI modification.

As to quaternary structure, interacts with PODXL and NHERF2. Found in a complex with EZR, PODXL and NHERF2. Interacts with PALS1. Interacts with MCC, PLEKHG6, SCYL3/PACE1, NHERF1 and TMEM8B. Interacts (when phosphorylated) with FES/FPS. Interacts with dimeric S100P, the interaction may be activating through unmasking of F-actin binding sites. Identified in complexes that contain VIM, EZR, AHNAK, BFSP1, BFSP2, ANK2, PLEC, PRX and spectrin. Detected in a complex composed of at least EZR, AHNAK, PPL and PRX. Interacts with PDPN (via cytoplasmic domain); activates RHOA and promotes epithelial-mesenchymal transition. Interacts with SPN/CD43 cytoplasmic tail, CD44 and ICAM2. Interacts with SLC9A3; interaction targets SLC9A3 to the apical membrane. Interacts with SLC9A1; regulates interactions of SLC9A1 with cytoskeletal and promotes stress fiber formation. Interacts with CLIC5; may work together in a complex which also includes RDX and MYO6 to stabilize linkages between the plasma membrane and subjacent actin cytoskeleton at the base of stereocilia. Phosphorylated by tyrosine-protein kinases. Phosphorylation by ROCK2 suppresses the head-to-tail association of the N-terminal and C-terminal halves resulting in an opened conformation which is capable of actin and membrane-binding. In terms of processing, S-nitrosylation is induced by interferon-gamma and oxidatively-modified low-densitity lipoprotein (LDL(ox)) possibly implicating the iNOS-S100A8/9 transnitrosylase complex. As to expression, glomerular epithelium cell (podocyte). Expressed in cerebrum, cerebellum and hippocampus (at protein level). Expressed in the small intestine, lung, kidney and ovaries.

Its subcellular location is the apical cell membrane. The protein resides in the cell projection. It is found in the microvillus membrane. The protein localises to the ruffle membrane. It localises to the cytoplasm. Its subcellular location is the cell cortex. The protein resides in the cytoskeleton. It is found in the microvillus. Its activity is regulated as follows. A head-to-tail association, of the N-terminal and C-terminal halves results in a closed conformation (inactive form) which is incapable of actin or membrane-binding. Probably involved in connections of major cytoskeletal structures to the plasma membrane. In epithelial cells, required for the formation of microvilli and membrane ruffles on the apical pole. Along with PLEKHG6, required for normal macropinocytosis. This is Ezrin (Ezr) from Rattus norvegicus (Rat).